The chain runs to 316 residues: MSDDRLSVAIIGSGNIGTDLMIKIMRNSKLLKVGAMVGIDPKSDGLARAQRLGVPTTAEGVDGLLDMPAFRDIKIAFDATSAGAQAIHNQKLQAHGVRVIDLTPAAIGPYVIPVVNFDQHVDAPNINMVTCGGQATIPIVHAVSKVSPVHYAEIVASISSKSAGPGTRANIDEFTETTSKAILEVGGAAQGRAIIILNPAEPPLIMRDTVYCFVSAEANIDAITDSVEQMVKSVQEYVPGYRLKQKVQFEKIVAGNEQNIPGLGWSTGLKVSVFLEVEGAGHYLPSYAGNLDIMTSAGLTVAERIAGSGVQVGGLK.

13 to 16 serves as a coordination point for NAD(+); sequence SGNI. Cysteine 131 (acyl-thioester intermediate) is an active-site residue. NAD(+) contacts are provided by residues 162–170 and asparagine 290; that span reads SAGPGTRAN.

It belongs to the acetaldehyde dehydrogenase family.

It carries out the reaction acetaldehyde + NAD(+) + CoA = acetyl-CoA + NADH + H(+). Catalyzes the conversion of acetaldehyde to acetyl-CoA, using NAD(+) and coenzyme A. Is the final enzyme in the meta-cleavage pathway for the degradation of 2-aminophenol. The protein is Acetaldehyde dehydrogenase (amnH) of Pseudomonas sp.